A 314-amino-acid polypeptide reads, in one-letter code: Peroxisome biogenesis factor 10 (314 aa).

The Peroxisomal matrix portion of the chain corresponds to 1–7 (MNTYVAE). A helical transmembrane segment spans residues 8-37 (IGEIVRSQRRDEEYIEDITERLSRVSKELL). Gly38 is a topological domain (cytoplasmic). The helical transmembrane segment at 39 to 60 (QRTWIRWFPYLKSIASTLYYTS) threads the bilayer. Residues 61–90 (TVVLGNQTLGEEYVHLFESNGLERTVPSIP) are Peroxisomal matrix-facing. Residues 91–110 (SRISFVLLHSAFPLISNYLI) form a helical membrane-spanning segment. Over 111-142 (QKAESTLTHPSTESFLGIPIRKNQKARQSFLD) the chain is Cytoplasmic. A helical membrane pass occupies residues 143–166 (VFFWLRTKLFPQLQRAHIALFYIT). The Peroxisomal matrix portion of the chain corresponds to 167–197 (GAYYSIARRFTGIRFLSASAHSDIPALKVYR). Residues 198–218 (FLGYITLIQLAVSIGISLYSF) traverse the membrane as a helical segment. Topologically, residues 219–314 (LEQEKFNNKL…PRDVTPLLNL (96 aa)) are cytoplasmic. Cys255, Cys258, Cys269, His271, Cys274, Cys277, Cys296, and Cys299 together coordinate Zn(2+). Residues 255 to 300 (CSICLENKNPSALFCGHLFCWTCIQEHAVAATSSASTSSARCPQCR) form an RING-type zinc finger.

It belongs to the pex2/pex10/pex12 family. As to quaternary structure, component of the PEX2-PEX10-PEX12 retrotranslocation channel.

The protein resides in the peroxisome membrane. The catalysed reaction is S-ubiquitinyl-[E2 ubiquitin-conjugating enzyme]-L-cysteine + [acceptor protein]-L-lysine = [E2 ubiquitin-conjugating enzyme]-L-cysteine + N(6)-ubiquitinyl-[acceptor protein]-L-lysine.. It functions in the pathway protein modification; protein ubiquitination. Its activity is regulated as follows. The E3 ubiquitin-protein ligase activity is stimulated by PEX12/prx-12. Its function is as follows. E3 ubiquitin-protein ligase component of a retrotranslocation channel required for peroxisome organization by mediating export of the PEX5/prx-5 receptor from peroxisomes to the cytosol, thereby promoting PEX5/prx-5 recycling. The retrotranslocation channel is composed of PEX2/prx-2, PEX10/prx-10 and PEX12/prx-12; each subunit contributing transmembrane segments that coassemble into an open channel that specifically allows the passage of PEX5/prx-5 through the peroxisomal membrane. PEX10/prx-10 also regulates PEX5 recycling by acting as a E3 ubiquitin-protein ligase. When PEX5/prx-5 recycling is compromised, PEX10/prx-10 catalyzes polyubiquitination of PEX5/prx-5 during its passage through the retrotranslocation channel, leading to its degradation. In Caenorhabditis elegans, this protein is Peroxisome biogenesis factor 10.